We begin with the raw amino-acid sequence, 259 residues long: Ribosomal RNA small subunit methyltransferase J (259 aa).

Residues 101–102 (RD), 117–118 (ER), 153–154 (SS), and Asp-176 each bind S-adenosyl-L-methionine.

It belongs to the methyltransferase superfamily. RsmJ family.

The protein localises to the cytoplasm. The catalysed reaction is guanosine(1516) in 16S rRNA + S-adenosyl-L-methionine = N(2)-methylguanosine(1516) in 16S rRNA + S-adenosyl-L-homocysteine + H(+). Specifically methylates the guanosine in position 1516 of 16S rRNA. This is Ribosomal RNA small subunit methyltransferase J from Aliivibrio fischeri (strain ATCC 700601 / ES114) (Vibrio fischeri).